Here is a 1122-residue protein sequence, read N- to C-terminus: Breast carcinoma-amplified sequence 3 homolog (1122 aa).

Residues 1–41 (MSADSPRRHPSGVVGSGIGLGSGSGTGLGSGSTGGSKSGAA) are disordered. The span at 14–37 (VGSGIGLGSGSGTGLGSGSTGGSK) shows a compositional bias: gly residues. S55 is modified (phosphoserine). 4 stretches are compositionally biased toward low complexity: residues 357–377 (GTTA…ASGG), 626–641 (GSNS…SLSD), 966–987 (TKDN…PSSN), and 1036–1051 (LSLE…PLSL). Disordered stretches follow at residues 357–382 (GTTA…DAKQ), 620–644 (GVGV…DDSG), 966–990 (TKDN…NKVQ), 1033–1054 (NSRL…LTNG), and 1071–1122 (GVAQ…RRNL). S638 is modified (phosphoserine). The segment covering 1087–1112 (VDDDDEEEEEEEEELDEEAEPDDDER) has biased composition (acidic residues). Positions 1113 to 1122 (EDRPLGRRNL) are enriched in basic and acidic residues.

It belongs to the BCAS3 family. Expressed in all postembryonic pericardial cells, but not in cardioblasts. Also expressed in Garland cells in third instar larvae (at protein level).

Its subcellular location is the cytoplasm. Its function is as follows. Regulates macropinocytosis in pericardial cells. The polypeptide is Breast carcinoma-amplified sequence 3 homolog (rudhira) (Drosophila melanogaster (Fruit fly)).